The sequence spans 336 residues: Holliday junction branch migration complex subunit RuvB (336 aa).

Positions 4-184 (ADRLISAGTT…FGIVQRLEFY (181 aa)) are large ATPase domain (RuvB-L). ATP is bound by residues I23, R24, G65, K68, T69, T70, 131-133 (EDY), R174, Y184, and R221. T69 contributes to the Mg(2+) binding site. Residues 185 to 255 (QVPDLQYIVS…IAAQALDMLN (71 aa)) form a small ATPAse domain (RuvB-S) region. The head domain (RuvB-H) stretch occupies residues 258 to 336 (AEGFDYMDRK…HFGITPPEMP (79 aa)). Positions 294, 313, and 318 each coordinate DNA.

This sequence belongs to the RuvB family. Homohexamer. Forms an RuvA(8)-RuvB(12)-Holliday junction (HJ) complex. HJ DNA is sandwiched between 2 RuvA tetramers; dsDNA enters through RuvA and exits via RuvB. An RuvB hexamer assembles on each DNA strand where it exits the tetramer. Each RuvB hexamer is contacted by two RuvA subunits (via domain III) on 2 adjacent RuvB subunits; this complex drives branch migration. In the full resolvosome a probable DNA-RuvA(4)-RuvB(12)-RuvC(2) complex forms which resolves the HJ.

Its subcellular location is the cytoplasm. The enzyme catalyses ATP + H2O = ADP + phosphate + H(+). Functionally, the RuvA-RuvB-RuvC complex processes Holliday junction (HJ) DNA during genetic recombination and DNA repair, while the RuvA-RuvB complex plays an important role in the rescue of blocked DNA replication forks via replication fork reversal (RFR). RuvA specifically binds to HJ cruciform DNA, conferring on it an open structure. The RuvB hexamer acts as an ATP-dependent pump, pulling dsDNA into and through the RuvAB complex. RuvB forms 2 homohexamers on either side of HJ DNA bound by 1 or 2 RuvA tetramers; 4 subunits per hexamer contact DNA at a time. Coordinated motions by a converter formed by DNA-disengaged RuvB subunits stimulates ATP hydrolysis and nucleotide exchange. Immobilization of the converter enables RuvB to convert the ATP-contained energy into a lever motion, pulling 2 nucleotides of DNA out of the RuvA tetramer per ATP hydrolyzed, thus driving DNA branch migration. The RuvB motors rotate together with the DNA substrate, which together with the progressing nucleotide cycle form the mechanistic basis for DNA recombination by continuous HJ branch migration. Branch migration allows RuvC to scan DNA until it finds its consensus sequence, where it cleaves and resolves cruciform DNA. The chain is Holliday junction branch migration complex subunit RuvB from Shigella sonnei (strain Ss046).